A 350-amino-acid polypeptide reads, in one-letter code: Flap endonuclease 1 (350 aa).

The tract at residues 1–101 is N-domain; sequence MGVNLRELIP…REVEERLRRK (101 aa). Asp30, Asp83, Glu155, Glu157, Asp176, Asp178, and Asp239 together coordinate Mg(2+). The segment at 119 to 261 is I-domain; sequence EARKYAMMAA…TALRLVKSLG (143 aa). Residues 341–349 are interaction with PCNA; the sequence is RQSRLDMWF.

Belongs to the XPG/RAD2 endonuclease family. FEN1 subfamily. Interacts with PCNA. PCNA stimulates the nuclease activity without altering cleavage specificity. Requires Mg(2+) as cofactor.

Functionally, structure-specific nuclease with 5'-flap endonuclease and 5'-3' exonuclease activities involved in DNA replication and repair. During DNA replication, cleaves the 5'-overhanging flap structure that is generated by displacement synthesis when DNA polymerase encounters the 5'-end of a downstream Okazaki fragment. Binds the unpaired 3'-DNA end and kinks the DNA to facilitate 5' cleavage specificity. Cleaves one nucleotide into the double-stranded DNA from the junction in flap DNA, leaving a nick for ligation. Also involved in the base excision repair (BER) pathway. Acts as a genome stabilization factor that prevents flaps from equilibrating into structures that lead to duplications and deletions. Also possesses 5'-3' exonuclease activity on nicked or gapped double-stranded DNA. The chain is Flap endonuclease 1 from Aeropyrum pernix (strain ATCC 700893 / DSM 11879 / JCM 9820 / NBRC 100138 / K1).